A 123-amino-acid polypeptide reads, in one-letter code: Immunoglobulin heavy variable 4-34 (123 aa).

Residues 1-26 (MDLLHKNMKHLWFFLLLVAAPRWVLS) form the signal peptide. The interval 26–123 (SQVQLQQWGA…ADTAVYYCAR (98 aa)) is v region. The interval 27 to 51 (QVQLQQWGAGLLKPSETLSLTCAVY) is framework-1. In terms of domain architecture, Ig-like spans 27 to 123 (QVQLQQWGAG…ADTAVYYCAR (97 aa)). Cysteine 48 and cysteine 121 form a disulfide bridge. Positions 52-59 (GGSFSGYY) are complementarity-determining-1. The framework-2 stretch occupies residues 60–76 (WSWIRQPPGKGLEWIGE). Positions 77–83 (INHSGST) are complementarity-determining-2. N-linked (GlcNAc...) asparagine glycosylation is present at asparagine 78. The segment at 84–121 (NYNPSLKSRVTISVDTSKNQFSLKLSSVTAADTAVYYC) is framework-3. A complementarity-determining-3 region spans residues 122–123 (AR).

As to quaternary structure, immunoglobulins are composed of two identical heavy chains and two identical light chains; disulfide-linked.

It is found in the secreted. It localises to the cell membrane. In terms of biological role, v region of the variable domain of immunoglobulin heavy chains that participates in the antigen recognition. Immunoglobulins, also known as antibodies, are membrane-bound or secreted glycoproteins produced by B lymphocytes. In the recognition phase of humoral immunity, the membrane-bound immunoglobulins serve as receptors which, upon binding of a specific antigen, trigger the clonal expansion and differentiation of B lymphocytes into immunoglobulins-secreting plasma cells. Secreted immunoglobulins mediate the effector phase of humoral immunity, which results in the elimination of bound antigens. The antigen binding site is formed by the variable domain of one heavy chain, together with that of its associated light chain. Thus, each immunoglobulin has two antigen binding sites with remarkable affinity for a particular antigen. The variable domains are assembled by a process called V-(D)-J rearrangement and can then be subjected to somatic hypermutations which, after exposure to antigen and selection, allow affinity maturation for a particular antigen. The protein is Immunoglobulin heavy variable 4-34 of Homo sapiens (Human).